We begin with the raw amino-acid sequence, 312 residues long: DNA-directed RNA polymerase subunit alpha (312 aa).

Residues 1–227 are alpha N-terminal domain (alpha-NTD); that stretch reads MNNFYIKCLK…SFFSSLLENK (227 aa). The alpha C-terminal domain (alpha-CTD) stretch occupies residues 243–312; the sequence is PKNPHTNIAI…KNKLGIVLSN (70 aa).

It belongs to the RNA polymerase alpha chain family. In plastids the minimal PEP RNA polymerase catalytic core is composed of four subunits: alpha, beta, beta', and beta''. When a (nuclear-encoded) sigma factor is associated with the core the holoenzyme is formed, which can initiate transcription.

The protein localises to the plastid. It localises to the chloroplast. The enzyme catalyses RNA(n) + a ribonucleoside 5'-triphosphate = RNA(n+1) + diphosphate. In terms of biological role, DNA-dependent RNA polymerase catalyzes the transcription of DNA into RNA using the four ribonucleoside triphosphates as substrates. The chain is DNA-directed RNA polymerase subunit alpha from Trieres chinensis (Marine centric diatom).